Reading from the N-terminus, the 368-residue chain is CCA-adding enzyme (368 aa).

Residues Gly-8 and Arg-11 each contribute to the ATP site. CTP contacts are provided by Gly-8 and Arg-11. Residues Asp-21 and Asp-23 each contribute to the Mg(2+) site. ATP contacts are provided by Arg-91, Arg-137, and Arg-140. Residues Arg-91, Arg-137, and Arg-140 each contribute to the CTP site.

This sequence belongs to the tRNA nucleotidyltransferase/poly(A) polymerase family. Bacterial CCA-adding enzyme type 2 subfamily. Mg(2+) is required as a cofactor.

It carries out the reaction a tRNA precursor + 2 CTP + ATP = a tRNA with a 3' CCA end + 3 diphosphate. The enzyme catalyses a tRNA with a 3' CCA end + 2 CTP + ATP = a tRNA with a 3' CCACCA end + 3 diphosphate. Its function is as follows. Catalyzes the addition and repair of the essential 3'-terminal CCA sequence in tRNAs without using a nucleic acid template. Adds these three nucleotides in the order of C, C, and A to the tRNA nucleotide-73, using CTP and ATP as substrates and producing inorganic pyrophosphate. tRNA 3'-terminal CCA addition is required both for tRNA processing and repair. Also involved in tRNA surveillance by mediating tandem CCA addition to generate a CCACCA at the 3' terminus of unstable tRNAs. While stable tRNAs receive only 3'-terminal CCA, unstable tRNAs are marked with CCACCA and rapidly degraded. The protein is CCA-adding enzyme of Pseudomonas putida (strain ATCC 700007 / DSM 6899 / JCM 31910 / BCRC 17059 / LMG 24140 / F1).